The following is a 655-amino-acid chain: Probable alpha-galactosidase D (655 aa).

Positions 1–16 (MLPKIFYLSLLPAALG) are cleaved as a signal peptide. Residues Asn47 and Asn91 are each glycosylated (N-linked (GlcNAc...) asparagine). Cysteines 124 and 155 form a disulfide. Residue Asp153 is the Nucleophile of the active site. N-linked (GlcNAc...) asparagine glycans are attached at residues Asn180 and Asn189. 198-202 (EWGID) is a substrate binding site. Asp220 functions as the Proton donor in the catalytic mechanism. Asn349, Asn436, Asn458, Asn503, Asn537, Asn541, and Asn580 each carry an N-linked (GlcNAc...) asparagine glycan.

Belongs to the glycosyl hydrolase 27 family.

It is found in the secreted. The enzyme catalyses Hydrolysis of terminal, non-reducing alpha-D-galactose residues in alpha-D-galactosides, including galactose oligosaccharides, galactomannans and galactolipids.. In terms of biological role, hydrolyzes a variety of simple alpha-D-galactoside as well as more complex molecules such as oligosaccharides and polysaccharides. The chain is Probable alpha-galactosidase D (aglD) from Aspergillus flavus (strain ATCC 200026 / FGSC A1120 / IAM 13836 / NRRL 3357 / JCM 12722 / SRRC 167).